The chain runs to 487 residues: Cysteine--tRNA ligase (487 aa).

Zn(2+) is bound at residue Cys-29. The short motif at Val-31 to His-41 is the 'HIGH' region element. Cys-209, His-234, and Glu-238 together coordinate Zn(2+). The 'KMSKS' region motif lies at Lys-266–Ser-270. Lys-269 contacts ATP.

This sequence belongs to the class-I aminoacyl-tRNA synthetase family. As to quaternary structure, monomer. It depends on Zn(2+) as a cofactor.

The protein localises to the cytoplasm. It carries out the reaction tRNA(Cys) + L-cysteine + ATP = L-cysteinyl-tRNA(Cys) + AMP + diphosphate. This Trichlorobacter lovleyi (strain ATCC BAA-1151 / DSM 17278 / SZ) (Geobacter lovleyi) protein is Cysteine--tRNA ligase.